The primary structure comprises 116 residues: uncharacterized protein (116 aa).

A helical transmembrane segment spans residues 89–109; it reads VGFVILILLYILTNPNAIELI.

It belongs to the M.jannaschii MJ0023/MJ0349/MJ1072/MJ1074/MJ1107/MJECL16 family.

It is found in the membrane. This is an uncharacterized protein from Methanocaldococcus jannaschii (strain ATCC 43067 / DSM 2661 / JAL-1 / JCM 10045 / NBRC 100440) (Methanococcus jannaschii).